Here is a 332-residue protein sequence, read N- to C-terminus: Adenosine deaminase (332 aa).

Zn(2+)-binding residues include histidine 12 and histidine 14. Substrate is bound by residues histidine 14, aspartate 16, and glycine 170. Histidine 197 serves as a coordination point for Zn(2+). Glutamate 200 functions as the Proton donor in the catalytic mechanism. Zn(2+) is bound at residue aspartate 278.

It belongs to the metallo-dependent hydrolases superfamily. Adenosine and AMP deaminases family. Adenosine deaminase subfamily. The cofactor is Zn(2+).

It catalyses the reaction adenosine + H2O + H(+) = inosine + NH4(+). It carries out the reaction 2'-deoxyadenosine + H2O + H(+) = 2'-deoxyinosine + NH4(+). In terms of biological role, catalyzes the hydrolytic deamination of adenosine and 2-deoxyadenosine. This chain is Adenosine deaminase, found in Clostridium perfringens (strain ATCC 13124 / DSM 756 / JCM 1290 / NCIMB 6125 / NCTC 8237 / Type A).